A 117-amino-acid polypeptide reads, in one-letter code: MSKTSPRLSSLIAELKSVARDSGADVWHDVADRLEKPRSTHAEVNLSRIERYASEDETVIVPGKVLGSGALRKSVTVAAVDFSSSAATKIEHADGEAVHLEQAVEQNPDGTDVRVIR.

This sequence belongs to the eukaryotic ribosomal protein eL18 family.

This is Large ribosomal subunit protein eL18 from Halobacterium salinarum (strain ATCC 29341 / DSM 671 / R1).